Consider the following 169-residue polypeptide: Prolyl-tRNA synthetase associated domain-containing protein 1 (169 aa).

The protein belongs to the PRORSD1 family.

The chain is Prolyl-tRNA synthetase associated domain-containing protein 1 (Prorsd1) from Mus musculus (Mouse).